The chain runs to 155 residues: Endoribonuclease YbeY (155 aa).

Residues His114, His118, and His124 each contribute to the Zn(2+) site.

This sequence belongs to the endoribonuclease YbeY family. Zn(2+) is required as a cofactor.

Its subcellular location is the cytoplasm. Its function is as follows. Single strand-specific metallo-endoribonuclease involved in late-stage 70S ribosome quality control and in maturation of the 3' terminus of the 16S rRNA. The polypeptide is Endoribonuclease YbeY (Escherichia coli O17:K52:H18 (strain UMN026 / ExPEC)).